Consider the following 343-residue polypeptide: Fructose-1,6-bisphosphatase class 1 (343 aa).

Positions 90, 109, 111, and 112 each coordinate Mg(2+). Substrate contacts are provided by residues 112 to 115 and Asn199; that span reads DGSS. Glu271 is a Mg(2+) binding site.

Belongs to the FBPase class 1 family. Homotetramer. It depends on Mg(2+) as a cofactor.

The protein resides in the cytoplasm. The catalysed reaction is beta-D-fructose 1,6-bisphosphate + H2O = beta-D-fructose 6-phosphate + phosphate. It functions in the pathway carbohydrate biosynthesis; Calvin cycle. The sequence is that of Fructose-1,6-bisphosphatase class 1 from Rhodopseudomonas palustris (strain HaA2).